Here is a 189-residue protein sequence, read N- to C-terminus: Protein GrpE (189 aa).

Residues 1–31 (MSKKHMKGNGGEVPENSEMSGSEELVAVEPG) form a disordered region.

Belongs to the GrpE family. In terms of assembly, homodimer.

It is found in the cytoplasm. Participates actively in the response to hyperosmotic and heat shock by preventing the aggregation of stress-denatured proteins, in association with DnaK and GrpE. It is the nucleotide exchange factor for DnaK and may function as a thermosensor. Unfolded proteins bind initially to DnaJ; upon interaction with the DnaJ-bound protein, DnaK hydrolyzes its bound ATP, resulting in the formation of a stable complex. GrpE releases ADP from DnaK; ATP binding to DnaK triggers the release of the substrate protein, thus completing the reaction cycle. Several rounds of ATP-dependent interactions between DnaJ, DnaK and GrpE are required for fully efficient folding. This chain is Protein GrpE, found in Syntrophobacter fumaroxidans (strain DSM 10017 / MPOB).